Here is a 347-residue protein sequence, read N- to C-terminus: Isopentenyl-diphosphate delta-isomerase (347 aa).

Arginine 9–lysine 10 provides a ligand contact to substrate. FMN-binding positions include alanine 65–threonine 67, serine 95, and asparagine 124. A substrate-binding site is contributed by serine 95–histidine 97. Glutamine 154 lines the substrate pocket. Glutamate 155 is a binding site for Mg(2+). FMN-binding positions include lysine 186, serine 211, threonine 216, glycine 262–arginine 264, and serine 283–arginine 284.

It belongs to the IPP isomerase type 2 family. In terms of assembly, homooctamer. Dimer of tetramers. It depends on FMN as a cofactor. NADPH is required as a cofactor. Mg(2+) serves as cofactor.

The protein localises to the cytoplasm. It carries out the reaction isopentenyl diphosphate = dimethylallyl diphosphate. Involved in the biosynthesis of isoprenoids. Catalyzes the 1,3-allylic rearrangement of the homoallylic substrate isopentenyl (IPP) to its allylic isomer, dimethylallyl diphosphate (DMAPP). The sequence is that of Isopentenyl-diphosphate delta-isomerase from Staphylococcus saprophyticus subsp. saprophyticus (strain ATCC 15305 / DSM 20229 / NCIMB 8711 / NCTC 7292 / S-41).